Reading from the N-terminus, the 311-residue chain is Ornithine carbamoyltransferase (311 aa).

Residues 54 to 57 (STRT), Q81, R105, and 132 to 135 (HPCQ) each bind carbamoyl phosphate. L-ornithine is bound by residues N164, D228, and 232–233 (SM). Residues 268 to 269 (CL) and R296 each bind carbamoyl phosphate.

This sequence belongs to the aspartate/ornithine carbamoyltransferase superfamily. OTCase family.

The protein localises to the cytoplasm. The catalysed reaction is carbamoyl phosphate + L-ornithine = L-citrulline + phosphate + H(+). The protein operates within amino-acid biosynthesis; L-arginine biosynthesis; L-arginine from L-ornithine and carbamoyl phosphate: step 1/3. Reversibly catalyzes the transfer of the carbamoyl group from carbamoyl phosphate (CP) to the N(epsilon) atom of ornithine (ORN) to produce L-citrulline. This is Ornithine carbamoyltransferase from Renibacterium salmoninarum (strain ATCC 33209 / DSM 20767 / JCM 11484 / NBRC 15589 / NCIMB 2235).